Here is a 134-residue protein sequence, read N- to C-terminus: Profilin-1 (134 aa).

Cys-13 and Cys-118 form a disulfide bridge. The Involved in PIP2 interaction motif lies at 84–100; sequence AVVRGKKGSGGITIKKT. Phosphothreonine is present on Thr-114.

This sequence belongs to the profilin family. In terms of assembly, occurs in many kinds of cells as a complex with monomeric actin in a 1:1 ratio. Post-translationally, phosphorylated by MAP kinases.

It localises to the cytoplasm. The protein resides in the cytoskeleton. In terms of biological role, binds to actin and affects the structure of the cytoskeleton. At high concentrations, profilin prevents the polymerization of actin, whereas it enhances it at low concentrations. The sequence is that of Profilin-1 from Olea europaea (Common olive).